The chain runs to 231 residues: MSEIKDVIVQGLWKNNSALVQLLGLCPLLAVTSTATNALGLGLATTLVLTLTNLTISTLRHWTPAEIRIPIYVMIIASVVSAVQMLINAYAFGLYQSLGIFIPLIVTNCIVVGRAEAFAAKKGPALSALDGFSIGMGATCAMFVLGSLREIIGNGTLFDGADALLGSWAKVLRVEIFHTDSPFLLAMLPPGAFIGLGLMLAGKYLIDERMKKRRTEAAAERALPNGETGNV.

6 helical membrane-spanning segments follow: residues 18-38 (ALVQ…ATNA), 39-59 (LGLG…ISTL), 63-83 (TPAE…VSAV), 86-106 (LINA…PLIV), 125-145 (ALSA…MFVL), and 182-202 (PFLL…MLAG).

It belongs to the NqrDE/RnfAE family. In terms of assembly, the complex is composed of six subunits: RsxA, RsxB, RsxC, RsxD, RsxE and RsxG.

Its subcellular location is the cell inner membrane. Functionally, part of a membrane-bound complex that couples electron transfer with translocation of ions across the membrane. Required to maintain the reduced state of SoxR. This Shigella boydii serotype 18 (strain CDC 3083-94 / BS512) protein is Ion-translocating oxidoreductase complex subunit E.